Reading from the N-terminus, the 171-residue chain is MAEKRNIFLVGPMGAGKSTIGRHLAQMLHLEFHDSDQEIESRTGADIAWVFDVEGEEGFRRREAQVIADLTEKQGIVLATGGGSVQSKDIRNYLSARGIVVYLETTIDKQVARTQRDKRRPLLQVDDPRSVLETLAESRNPLYEEIADVIVKTDDQSAKVVANQIIEQLGF.

Residue 14–19 coordinates ATP; it reads GAGKST. Ser18 provides a ligand contact to Mg(2+). Residues Asp36, Arg60, and Gly82 each coordinate substrate. Arg120 serves as a coordination point for ATP. Arg139 is a substrate binding site. ATP is bound at residue Gln156.

It belongs to the shikimate kinase family. As to quaternary structure, monomer. Mg(2+) serves as cofactor.

The protein resides in the cytoplasm. It catalyses the reaction shikimate + ATP = 3-phosphoshikimate + ADP + H(+). It functions in the pathway metabolic intermediate biosynthesis; chorismate biosynthesis; chorismate from D-erythrose 4-phosphate and phosphoenolpyruvate: step 5/7. Catalyzes the specific phosphorylation of the 3-hydroxyl group of shikimic acid using ATP as a cosubstrate. This is Shikimate kinase from Shewanella amazonensis (strain ATCC BAA-1098 / SB2B).